Here is a 103-residue protein sequence, read N- to C-terminus: Stefin-2 (103 aa).

The Secondary area of contact motif lies at 52-56 (QVVQG).

It belongs to the cystatin family.

The protein resides in the cytoplasm. In terms of biological role, this is an intracellular thiol proteinase inhibitor. This is Stefin-2 (Stfa2) from Mus musculus (Mouse).